The primary structure comprises 290 residues: 33 kDa chaperonin (290 aa).

Intrachain disulfides connect cysteine 231–cysteine 233 and cysteine 263–cysteine 266.

Belongs to the HSP33 family. Under oxidizing conditions two disulfide bonds are formed involving the reactive cysteines. Under reducing conditions zinc is bound to the reactive cysteines and the protein is inactive.

It localises to the cytoplasm. Functionally, redox regulated molecular chaperone. Protects both thermally unfolding and oxidatively damaged proteins from irreversible aggregation. Plays an important role in the bacterial defense system toward oxidative stress. This Thermotoga sp. (strain RQ2) protein is 33 kDa chaperonin.